A 127-amino-acid chain; its full sequence is Glycine cleavage system H protein (127 aa).

In terms of domain architecture, Lipoyl-binding spans 22 to 104 (EAVIGITHFA…YTEGWMLRVK (83 aa)). Lys-63 bears the N6-lipoyllysine mark.

It belongs to the GcvH family. The glycine cleavage system is composed of four proteins: P, T, L and H. (R)-lipoate is required as a cofactor.

The glycine cleavage system catalyzes the degradation of glycine. The H protein shuttles the methylamine group of glycine from the P protein to the T protein. This is Glycine cleavage system H protein from Nitratidesulfovibrio vulgaris (strain DP4) (Desulfovibrio vulgaris).